Here is a 198-residue protein sequence, read N- to C-terminus: ADP-ribosylation factor-like protein 3 (198 aa).

Methionine 1 is subject to N-acetylmethionine. 24–31 contacts GTP; that stretch reads GLDNAGKT. Lysine 50 is covalently cross-linked (Glycyl lysine isopeptide (Lys-Gly) (interchain with G-Cter in ubiquitin)). GTP is bound by residues 74-78 and 133-136; these read DVGGQ and NKQD.

The protein belongs to the small GTPase superfamily. Arf family. In terms of assembly, interacts with SYS1 and SLO1.

It localises to the golgi apparatus. Its function is as follows. Involved in the targeting of ARL1 to the Golgi. Can bind and hydrolyze GTP. This chain is ADP-ribosylation factor-like protein 3 (ARL3), found in Saccharomyces cerevisiae (strain ATCC 204508 / S288c) (Baker's yeast).